A 221-amino-acid chain; its full sequence is MSTAARKIRLLMLLRRNGVSDTGVLRAIEMIPREVFVPPTFHDQAYEDTALPIGHGQTISQPLVVGLMTQVLDLHDRLRVLEIGTGSGYQAAVLSRIVRRVYTIERHRPLLMEAERRFNTLRLHNITARLGDGMRGWPEAAPFERILVTAGGGAEPPADLVKQLAVGGVMVIPLGPDRREQRVVRLRRTESGLAREDLWPVRFVPLLPDVAPEAPRAERAS.

Residue serine 60 is part of the active site.

This sequence belongs to the methyltransferase superfamily. L-isoaspartyl/D-aspartyl protein methyltransferase family.

The protein localises to the cytoplasm. The catalysed reaction is [protein]-L-isoaspartate + S-adenosyl-L-methionine = [protein]-L-isoaspartate alpha-methyl ester + S-adenosyl-L-homocysteine. Functionally, catalyzes the methyl esterification of L-isoaspartyl residues in peptides and proteins that result from spontaneous decomposition of normal L-aspartyl and L-asparaginyl residues. It plays a role in the repair and/or degradation of damaged proteins. The protein is Protein-L-isoaspartate O-methyltransferase of Rhodospirillum centenum (strain ATCC 51521 / SW).